Consider the following 604-residue polypeptide: Tyrosine-protein kinase transforming protein erbB (604 aa).

Residues 132 to 399 (FKKVKVLGSG…KMARDPPRYL (268 aa)) form the Protein kinase domain. ATP is bound by residues 138–146 (LGSGAFGTI) and Lys165. The active-site Proton acceptor is Asp257.

Belongs to the protein kinase superfamily. Tyr protein kinase family. EGF receptor subfamily.

The catalysed reaction is L-tyrosyl-[protein] + ATP = O-phospho-L-tyrosyl-[protein] + ADP + H(+). In terms of biological role, the v-erbB oncogene transforms avian fibroblasts and erythroblasts in culture and induces sarcomas and erythroleukemias in chickens. It is a truncated and mutated version of the receptor for epidermal growth factor. In Galliformes, this protein is Tyrosine-protein kinase transforming protein erbB (V-ERBB).